The chain runs to 245 residues: Probable metal transport system ATP-binding protein CPn_0542/CP_0210/CPj0542/CpB0563 (245 aa).

The 236-residue stretch at 5–240 folds into the ABC transporter domain; the sequence is ILAEGLAFRY…CCHPYKNQEF (236 aa). An ATP-binding site is contributed by 39–46; the sequence is GPNGGGKS.

It belongs to the ABC transporter superfamily.

It localises to the cell inner membrane. Its function is as follows. Part of an ATP-driven transport system CPn0541/CPn0542/CPn0543 for a metal. Probably responsible for energy coupling to the transport system. In Chlamydia pneumoniae (Chlamydophila pneumoniae), this protein is Probable metal transport system ATP-binding protein CPn_0542/CP_0210/CPj0542/CpB0563.